We begin with the raw amino-acid sequence, 308 residues long: Probable manganese-dependent inorganic pyrophosphatase (308 aa).

Residues H9, D13, D15, D75, H97, and D149 each contribute to the Mn(2+) site.

It belongs to the PPase class C family. Requires Mn(2+) as cofactor.

The protein resides in the cytoplasm. It carries out the reaction diphosphate + H2O = 2 phosphate + H(+). The sequence is that of Probable manganese-dependent inorganic pyrophosphatase from Bacillus pumilus (strain SAFR-032).